The primary structure comprises 543 residues: Plant intracellular Ras-group-related LRR protein 5 (543 aa).

10 LRR repeats span residues 239-262 (LQDV…IGSL), 264-284 (YLTK…AFGE), 285-307 (LSNL…SFGN), 309-331 (TSLA…LGKL), 332-354 (ANLR…IGSC), 356-377 (SLVE…IGKL), 378-400 (EKLE…VGSL), 402-424 (RLRE…CFAT), 426-448 (LVKL…IGNL), and 449-470 (EMLE…SFRC). The stretch at 472 to 494 (SRLRVFHADETPLEFPPREVVKL) is one LRR 11; degenerate repeat. Positions 495 to 502 (GAQAVVKY) match the GVYW; degenerate motif.

This sequence belongs to the SHOC2 family. As to expression, widely expressed.

In terms of biological role, leucine-rich repeat protein that likely mediates protein interactions, possibly in the context of signal transduction. This is Plant intracellular Ras-group-related LRR protein 5 (IRL5) from Oryza sativa subsp. japonica (Rice).